The following is a 456-amino-acid chain: Exodeoxyribonuclease 7 large subunit (456 aa).

The protein belongs to the XseA family. As to quaternary structure, heterooligomer composed of large and small subunits.

It is found in the cytoplasm. The catalysed reaction is Exonucleolytic cleavage in either 5'- to 3'- or 3'- to 5'-direction to yield nucleoside 5'-phosphates.. Bidirectionally degrades single-stranded DNA into large acid-insoluble oligonucleotides, which are then degraded further into small acid-soluble oligonucleotides. This is Exodeoxyribonuclease 7 large subunit from Lactobacillus johnsonii (strain CNCM I-12250 / La1 / NCC 533).